Reading from the N-terminus, the 356-residue chain is 3-isopropylmalate dehydrogenase (356 aa).

The substrate site is built by Arg-95, Arg-105, Arg-133, and Asp-223. 3 residues coordinate Mg(2+): Asp-223, Asp-247, and Asp-251. 281-293 is a binding site for NAD(+); sequence GSAPDIAGQNKAN.

It belongs to the isocitrate and isopropylmalate dehydrogenases family. LeuB type 1 subfamily. Homodimer. The cofactor is Mg(2+). Mn(2+) is required as a cofactor.

Its subcellular location is the cytoplasm. The enzyme catalyses (2R,3S)-3-isopropylmalate + NAD(+) = 4-methyl-2-oxopentanoate + CO2 + NADH. Its pathway is amino-acid biosynthesis; L-leucine biosynthesis; L-leucine from 3-methyl-2-oxobutanoate: step 3/4. Catalyzes the oxidation of 3-carboxy-2-hydroxy-4-methylpentanoate (3-isopropylmalate) to 3-carboxy-4-methyl-2-oxopentanoate. The product decarboxylates to 4-methyl-2 oxopentanoate. The protein is 3-isopropylmalate dehydrogenase of Neisseria meningitidis serogroup A / serotype 4A (strain DSM 15465 / Z2491).